The primary structure comprises 126 residues: UPF0325 protein PBPRA2971 (126 aa).

This sequence belongs to the UPF0325 family.

This is UPF0325 protein PBPRA2971 from Photobacterium profundum (strain SS9).